The primary structure comprises 662 residues: Cytochrome bo(3) ubiquinol oxidase subunit 1 (662 aa).

Over 1–14 (MFGKLTFDAIPYHE) the chain is Extracellular. The helical transmembrane segment at 15 to 35 (PIIMITYIAIILIALCIASTI) threads the bilayer. Topologically, residues 36–58 (TYYKKWKYLWYEWFTTVDHKKIS) are cytoplasmic. Residues 59–79 (IMYGILAFVMLFRGFVDAILM) form a helical membrane-spanning segment. Positions 71, 75, and 98 each coordinate a ubiquinone. Over 80–106 (RTQQVVASAGFKGFLPPHHYDQIFTAH) the chain is Extracellular. H106 provides a ligand contact to heme b. A helical transmembrane segment spans residues 107 to 127 (GVIMIFFVAMPLVIGLMNLVI). Topologically, residues 128–145 (PLQIGARDVAFPFLNNLS) are cytoplasmic. The chain crosses the membrane as a helical span at residues 146 to 166 (FWLNVSSAVLLTLSLGIGEFA). The Extracellular portion of the chain corresponds to 167–189 (QTGWLAYPPLSGIKYSSGVGVDY). W170 is a heme b binding site. The chain crosses the membrane as a helical span at residues 190–210 (WIWSLQISGVGTTLTGINFLV). The Cytoplasmic segment spans residues 211–232 (TILKMRAPGMSFFKMPVFTWTS). The chain crosses the membrane as a helical span at residues 233 to 253 (LCTNILIVISFPVLTVTLVLL). The Extracellular portion of the chain corresponds to 254-277 (TLDRYFNFHFFTNDLGGNAMMYVN). A helical membrane pass occupies residues 278–298 (LIWIWGHPEVYILVLPVFGVF). Position 284 (H284) interacts with Cu(2+). Residues 284–288 (HPEVY) constitute a cross-link (1'-histidyl-3'-tyrosine (His-Tyr)). Position 288 (Y288) interacts with Fe(II)-heme o. At 299-309 (SEVVATFSKKR) the chain is on the cytoplasmic side. A helical membrane pass occupies residues 310–330 (LFGYVSLVWATLSITILSFIV). Residues 331-346 (WLHHFFTMGAGADVNT) are Extracellular-facing. The Cu(2+) site is built by H333 and H334. The helical transmembrane segment at 347–367 (FFGITTMIIAIPTGVKIFNWL) threads the bilayer. The Cytoplasmic portion of the chain corresponds to 368–380 (FTIYQGRVHMHSS). A helical transmembrane segment spans residues 381-401 (ILWTLGFLVTFSIGGMTGVLL). Residues 402–413 (SVPPADFVLHNS) lie on the Extracellular side of the membrane. H411 and H419 together coordinate Fe(II)-heme o. Residues 414–434 (LFLVAHFHNVIIGGVVFGCFA) form a helical membrane-spanning segment. Residue H421 coordinates heme b. The Cytoplasmic portion of the chain corresponds to 435-456 (GINYWFPKLFGFVLNEIWGKRA). The chain crosses the membrane as a helical span at residues 457 to 477 (FWFWIIGFFLAFIPLYFLGLM). Residues 478-493 (GMTRRLSQNIDSEFHM) are Extracellular-facing. Heme b contacts are provided by R481 and R482. A helical membrane pass occupies residues 494–514 (LLCIAAIGACFIGIGIICQVI). Over 515–586 (QFFISIKERR…INSINYHDIH (72 aa)) the chain is Cytoplasmic. A helical transmembrane segment spans residues 587–607 (MPKNTGLGFMISIFSLFFGFS). A608 is a topological domain (extracellular). A helical membrane pass occupies residues 609–629 (VWHITWLCILSFLAIIISLFI). The Cytoplasmic portion of the chain corresponds to 630–662 (NSLNEDTEYTISAEEIKKIEHQYWKNIQKAGLK).

It belongs to the heme-copper respiratory oxidase family. As to quaternary structure, the cytochrome bo(3) ubiquinol oxidase complex is a heterooctamer of two A chains, two B chains, two C chains and two D chains. Requires Cu(2+) as cofactor. Heme b is required as a cofactor. Fe(II)-heme o serves as cofactor.

Its subcellular location is the cell membrane. The catalysed reaction is 2 a ubiquinol + O2 + n H(+)(in) = 2 a ubiquinone + 2 H2O + n H(+)(out). Its function is as follows. Cytochrome bo(3) ubiquinol oxidase is the terminal enzyme in the aerobic respiratory chain. Catalyzes the four-electron reduction of O2 to water, using a ubiquinol as a membrane soluble electron donor for molecular oxygen reduction. Has proton pump activity across the membrane in addition to electron transfer, pumping 2 protons/electron and generating a proton motive force. All the redox centers of this enzyme complex are located within the largest subunit, subunit I. Protons are probably pumped via D- and K- channels found in this subunit. This chain is Cytochrome bo(3) ubiquinol oxidase subunit 1 (cyoB), found in Buchnera aphidicola subsp. Acyrthosiphon pisum (strain APS) (Acyrthosiphon pisum symbiotic bacterium).